A 214-amino-acid chain; its full sequence is Charged multivesicular body protein 2b-A (214 aa).

The stretch at 25–55 (QRAITRDRTALEKQEKQLEMEIKKMAKAGNK) forms a coiled coil. The interval 178 to 214 (MAKAPSAAKGLPSASASKSTGISDEEIERQLKALGVD) is disordered. An MIT-interacting motif motif is present at residues 202-212 (EEIERQLKALG).

This sequence belongs to the SNF7 family. In terms of assembly, probable core component of the endosomal sorting required for transport complex III (ESCRT-III). ESCRT-III components are thought to multimerize to form a flat lattice on the perimeter membrane of the endosome.

The protein resides in the cytoplasm. It localises to the cytosol. Its subcellular location is the late endosome membrane. In terms of biological role, probable core component of the endosomal sorting required for transport complex III (ESCRT-III) which is involved in multivesicular bodies (MVBs) formation and sorting of endosomal cargo proteins into MVBs. MVBs contain intraluminal vesicles (ILVs) that are generated by invagination and scission from the limiting membrane of the endosome and mostly are delivered to lysosomes enabling degradation of membrane proteins, such as stimulated growth factor receptors, lysosomal enzymes and lipids. The polypeptide is Charged multivesicular body protein 2b-A (chmp2b-a) (Xenopus laevis (African clawed frog)).